The primary structure comprises 206 residues: Large ribosomal subunit protein uL4 (206 aa).

This sequence belongs to the universal ribosomal protein uL4 family. Part of the 50S ribosomal subunit.

In terms of biological role, one of the primary rRNA binding proteins, this protein initially binds near the 5'-end of the 23S rRNA. It is important during the early stages of 50S assembly. It makes multiple contacts with different domains of the 23S rRNA in the assembled 50S subunit and ribosome. Functionally, forms part of the polypeptide exit tunnel. The sequence is that of Large ribosomal subunit protein uL4 from Afipia carboxidovorans (strain ATCC 49405 / DSM 1227 / KCTC 32145 / OM5) (Oligotropha carboxidovorans).